The chain runs to 587 residues: Beta-(1--&gt;2)glucan export ATP-binding/permease protein NdvA (587 aa).

In terms of domain architecture, ABC transmembrane type-1 spans 21–301 (VSLVVVANIV…MRQFATQIFE (281 aa)). 6 helical membrane-spanning segments follow: residues 23–43 (LVVV…ILFG), 57–77 (PILF…VLVA), 128–148 (GLWL…ALLI), 158–178 (LSAV…VVMS), 248–268 (MAST…VQAG), and 272–292 (VGDV…LDLM). The ABC transporter domain maps to 335–569 (IEFRDVSFGF…NGRFAALLRA (235 aa)). 368 to 375 (GPTGAGKT) is a binding site for ATP.

It belongs to the ABC transporter superfamily. Beta-(1--&gt;2)glucan exporter (TC 3.A.1.108.1) family. In terms of assembly, homodimer.

The protein localises to the cell inner membrane. The enzyme catalyses [(1-&gt;2)-beta-D-glucosyl](n)(in) + ATP + H2O = [(1-&gt;2)-beta-D-glucosyl](n)(out) + ADP + phosphate + H(+). In terms of biological role, involved in beta-(1--&gt;2)glucan export. Transmembrane domains (TMD) form a pore in the inner membrane and the ATP-binding domain (NBD) is responsible for energy generation. The protein is Beta-(1--&gt;2)glucan export ATP-binding/permease protein NdvA of Rhizobium johnstonii (strain DSM 114642 / LMG 32736 / 3841) (Rhizobium leguminosarum bv. viciae).